Here is a 472-residue protein sequence, read N- to C-terminus: Adenosylhomocysteinase (472 aa).

3 residues coordinate substrate: threonine 61, aspartate 136, and glutamate 196. 197-199 provides a ligand contact to NAD(+); that stretch reads TTT. Lysine 226 and aspartate 230 together coordinate substrate. NAD(+) is bound by residues asparagine 231, 260 to 265, glutamate 283, asparagine 318, 339 to 341, and asparagine 384; these read GYGDVG and IGH.

The protein belongs to the adenosylhomocysteinase family. NAD(+) serves as cofactor.

The protein resides in the cytoplasm. The enzyme catalyses S-adenosyl-L-homocysteine + H2O = L-homocysteine + adenosine. It functions in the pathway amino-acid biosynthesis; L-homocysteine biosynthesis; L-homocysteine from S-adenosyl-L-homocysteine: step 1/1. In terms of biological role, may play a key role in the regulation of the intracellular concentration of adenosylhomocysteine. The polypeptide is Adenosylhomocysteinase (Cupriavidus metallidurans (strain ATCC 43123 / DSM 2839 / NBRC 102507 / CH34) (Ralstonia metallidurans)).